The sequence spans 347 residues: MDVPGVNTTSANTTFSPGTSTLCVRDYKITQVLFPLLYTVLFFAGLITNSLAMRIFFQIRSKSNFIIFLKNTVISDLLMILTFPFKILSDAKLGAGPLRTLVCQVTSVTFYFTMYISISFLGLITIDRYLKTTRPFKTSSPSNLLGAKILSVVIWAFMFLISLPNMILTNRRPKDKDVTKCSFLKSEFGLVWHEIVNYICQVIFWINFLIVIVCYSLITKELYRSYVRTRGSAKVPKKKVNVKVFIIIAVFFICFVPFHFARIPYTLSQTRAVFDCSAENTLFYVKESTLWLTSLNACLDPFIYFFLCKSFRNSLTSMLRCSNSTSTSGTNKKKGQEGGEPSEETPM.

The Extracellular segment spans residues 1–33 (MDVPGVNTTSANTTFSPGTSTLCVRDYKITQVL). N-linked (GlcNAc...) asparagine glycosylation is found at Asn-7 and Asn-12. Intrachain disulfides connect Cys-23–Cys-276 and Cys-103–Cys-181. A helical transmembrane segment spans residues 34-56 (FPLLYTVLFFAGLITNSLAMRIF). Residues 57 to 67 (FQIRSKSNFII) lie on the Cytoplasmic side of the membrane. Phosphoserine occurs at positions 61 and 63. The helical transmembrane segment at 68–88 (FLKNTVISDLLMILTFPFKIL) threads the bilayer. Topologically, residues 89–103 (SDAKLGAGPLRTLVC) are extracellular. ADP is bound by residues Arg-99, Cys-103, and Tyr-111. A helical transmembrane segment spans residues 104–124 (QVTSVTFYFTMYISISFLGLI). Residues 125-148 (TIDRYLKTTRPFKTSSPSNLLGAK) lie on the Cytoplasmic side of the membrane. Residues 149–168 (ILSVVIWAFMFLISLPNMIL) traverse the membrane as a helical segment. Residues 162–165 (SLPN), 181–185 (CSFLK), His-193, and Asn-197 each bind ADP. Residues 169 to 191 (TNRRPKDKDVTKCSFLKSEFGLV) are Extracellular-facing. The chain crosses the membrane as a helical span at residues 192-213 (WHEIVNYICQVIFWINFLIVIV). Residues 214-239 (CYSLITKELYRSYVRTRGSAKVPKKK) are Cytoplasmic-facing. A helical membrane pass occupies residues 240–265 (VNVKVFIIIAVFFICFVPFHFARIPY). Residues 262-265 (RIPY), Gln-269, and Lys-286 each bind ADP. Residues 266–284 (TLSQTRAVFDCSAENTLFY) are Extracellular-facing. A helical membrane pass occupies residues 285–304 (VKESTLWLTSLNACLDPFIY). Topologically, residues 305–347 (FFLCKSFRNSLTSMLRCSNSTSTSGTNKKKGQEGGEPSEETPM) are cytoplasmic. The segment at 321–347 (CSNSTSTSGTNKKKGQEGGEPSEETPM) is disordered.

It belongs to the G-protein coupled receptor 1 family.

The protein localises to the cell membrane. Functionally, receptor for ADP and ATP coupled to G-proteins that inhibit the adenylyl cyclase second messenger system. Required for normal platelet aggregation and blood coagulation. This is P2Y purinoceptor 12 (P2ry12) from Mus musculus (Mouse).